The following is an 82-amino-acid chain: Large ribosomal subunit protein eL14 (82 aa).

Belongs to the eukaryotic ribosomal protein eL14 family.

This chain is Large ribosomal subunit protein eL14, found in Pyrococcus abyssi (strain GE5 / Orsay).